A 1064-amino-acid chain; its full sequence is Lethal(2) giant larvae protein homolog 1 (1064 aa).

WD repeat units follow at residues 38-71 (SALA…FTGL), 78-119 (VTQM…ALSF), 139-176 (VTVV…GQTL), 200-234 (SLQG…DHIF), 240-272 (LESL…GSFP), 290-332 (AINK…ETLV), 340-374 (IIDF…VLDL), 396-474 (TCSA…YKLS), 518-593 (QKVA…RVLV), 602-663 (TAVT…LRQS), 723-783 (VRCL…KEVQ), 792-844 (AIAV…VSAK), 849-902 (LTAH…VHYS), and 916-939 (VFTR…SLSA). Phosphoserine is present on serine 663. A Phosphothreonine modification is found at threonine 958. A disordered region spans residues 966–1010 (ESPKLSQANGTPSILLAPQSLDGSPDPAHSMGPDTPEPPEAALSP). 2 positions are modified to phosphoserine: serine 967 and serine 985.

Belongs to the WD repeat L(2)GL family. As to quaternary structure, associated with nonmuscle myosin II heavy chain. Interacts with PRKCI/aPKC, PARD6B/Par-6 and PARD6A. Interacts with STX4A. Interacts with RAB10 (GDP-bound form); the interaction is direct and promotes RAB10 association with membranes and activation through competition with the Rab inhibitor GDI1. Interacts with DCAF1. Post-translationally, phosphorylated at least at Ser-663 by PRKCI. As to expression, expressed in brain, kidney, and muscle but is barely seen in heart and placenta. Down-regulated or lost in all cell lines and in most of the tumor samples analyzed. Loss was associated with advanced stage of the disease.

It is found in the early endosome membrane. It localises to the golgi apparatus. Its subcellular location is the trans-Golgi network membrane. The protein resides in the golgi apparatus membrane. The protein localises to the cell projection. It is found in the axon. It localises to the cytoplasm. Its subcellular location is the cytoskeleton. Cortical cytoskeleton protein found in a complex involved in maintaining cell polarity and epithelial integrity. Involved in the regulation of mitotic spindle orientation, proliferation, differentiation and tissue organization of neuroepithelial cells. Involved in axonogenesis through RAB10 activation thereby regulating vesicular membrane trafficking toward the axonal plasma membrane. The polypeptide is Lethal(2) giant larvae protein homolog 1 (LLGL1) (Homo sapiens (Human)).